The following is a 294-amino-acid chain: Acetylglutamate kinase (294 aa).

Substrate contacts are provided by residues 63-64, Arg-85, and Asn-188; that span reads GG.

The protein belongs to the acetylglutamate kinase family. ArgB subfamily.

The protein resides in the cytoplasm. The enzyme catalyses N-acetyl-L-glutamate + ATP = N-acetyl-L-glutamyl 5-phosphate + ADP. The protein operates within amino-acid biosynthesis; L-arginine biosynthesis; N(2)-acetyl-L-ornithine from L-glutamate: step 2/4. Catalyzes the ATP-dependent phosphorylation of N-acetyl-L-glutamate. This is Acetylglutamate kinase from Methanococcus maripaludis (strain C6 / ATCC BAA-1332).